The sequence spans 84 residues: U8-theraphotoxin-Hhn1f (84 aa).

Residues 1 to 21 (MKVVLLVCLVWMMAMMELVSC) form the signal peptide. Intrachain disulfides connect Cys23–Cys35, Cys29–Cys44, Cys34–Cys67, Cys54–Cys75, and Cys69–Cys81.

This sequence belongs to the AVIT (prokineticin) family. As to expression, expressed by the venom gland.

It is found in the secreted. This is U8-theraphotoxin-Hhn1f from Cyriopagopus hainanus (Chinese bird spider).